A 348-amino-acid polypeptide reads, in one-letter code: NADH-ubiquinone oxidoreductase chain 2 (348 aa).

A run of 10 helical transmembrane segments spans residues 1-21 (MSPY…TITF), 25-45 (SWLM…PLMV), 60-80 (FLTQ…NAWM), 93-115 (LSAP…HFWL), 149-169 (LNTT…GLGG), 177-197 (KVLA…IQYS), 200-220 (LALL…LTLM), 239-259 (IATM…PLTG), 274-294 (NLPA…FFYL), and 326-346 (LAML…MVAI).

It belongs to the complex I subunit 2 family.

The protein localises to the mitochondrion inner membrane. The enzyme catalyses a ubiquinone + NADH + 5 H(+)(in) = a ubiquinol + NAD(+) + 4 H(+)(out). Core subunit of the mitochondrial membrane respiratory chain NADH dehydrogenase (Complex I) that is believed to belong to the minimal assembly required for catalysis. Complex I functions in the transfer of electrons from NADH to the respiratory chain. The immediate electron acceptor for the enzyme is believed to be ubiquinone. The sequence is that of NADH-ubiquinone oxidoreductase chain 2 (MT-ND2) from Latimeria chalumnae (Coelacanth).